Consider the following 396-residue polypeptide: Elongation factor Tu (396 aa).

A tr-type G domain is found at 11–205; that stretch reads KPHVNIGTIG…TVDEYIPTPE (195 aa). The segment at 20-27 is G1; it reads GHVDHGKT. 20–27 contributes to the GTP binding site; the sequence is GHVDHGKT. Residue Thr27 coordinates Mg(2+). Positions 61–65 are G2; the sequence is GITIN. The interval 82 to 85 is G3; sequence DAPG. Residues 82-86 and 137-140 each bind GTP; these read DAPGH and NKVD. The tract at residues 137-140 is G4; sequence NKVD. Residues 175 to 177 are G5; the sequence is SAL.

Belongs to the TRAFAC class translation factor GTPase superfamily. Classic translation factor GTPase family. EF-Tu/EF-1A subfamily. As to quaternary structure, monomer.

It is found in the cytoplasm. The enzyme catalyses GTP + H2O = GDP + phosphate + H(+). Its function is as follows. GTP hydrolase that promotes the GTP-dependent binding of aminoacyl-tRNA to the A-site of ribosomes during protein biosynthesis. In Lactobacillus johnsonii (strain CNCM I-12250 / La1 / NCC 533), this protein is Elongation factor Tu.